The following is a 705-amino-acid chain: Dolichyl-diphosphooligosaccharide--protein glycosyltransferase subunit STT3A (705 aa).

The Cytoplasmic portion of the chain corresponds to Met1–Leu17. A helical transmembrane segment spans residues Leu18 to Val38. Over Leu39–Leu119 the chain is Lumenal. A DXD motif 1 motif is present at residues Glu47 to Asp49. Asp49 serves as a coordination point for Mn(2+). A helical transmembrane segment spans residues Ala120–Leu138. The Cytoplasmic portion of the chain corresponds to Lys139–Asp140. Residues Ala141–Ile158 form a helical membrane-spanning segment. Residues Ser159 to Glu169 lie on the Lumenal side of the membrane. The Mn(2+) site is built by Asp167 and Glu169. The DXD motif 2 motif lies at Asp167–Glu169. A helical membrane pass occupies residues Gly170–Thr189. Residues Gly190–Ser191 lie on the Cytoplasmic side of the membrane. The chain crosses the membrane as a helical span at residues Ile192–Val206. The Lumenal segment spans residues Ser207 to Gly211. A helical membrane pass occupies residues Tyr212–Leu228. The Cytoplasmic portion of the chain corresponds to Thr229–Ser233. A helical membrane pass occupies residues His234 to Phe259. The Lumenal portion of the chain corresponds to Gln260–His267. The helical transmembrane segment at Met268–Arg287 threads the bilayer. Topologically, residues Ser288–Arg300 are cytoplasmic. The helical transmembrane segment at Ser301–Gly321 threads the bilayer. At Lys322–Thr356 the chain is on the lumenal side. The SVSE motif signature appears at Ser348–Glu351. Residues Trp357–Phe379 traverse the membrane as a helical segment. The Cytoplasmic segment spans residues Ser380–Ala385. Residues Arg386 to Val402 traverse the membrane as a helical segment. The Lumenal portion of the chain corresponds to Met403–Leu406. A dolichyl diphosphooligosaccharide-binding site is contributed by Arg405. The helical transmembrane segment at Met407–Thr428 threads the bilayer. At Tyr429–Lys453 the chain is on the cytoplasmic side. A helical membrane pass occupies residues Asn454–Phe473. Over His474–Thr705 the chain is Lumenal. Residues Trp525–Asp527 form an interacts with target acceptor peptide in protein substrate region. A WWDYG motif motif is present at residues Trp525–Gly529. Tyr530 contacts dolichyl diphosphooligosaccharide. Asn537 and Asn544 each carry an N-linked (GlcNAc...) asparagine glycan. The N-linked (GlcNAc...) (high mannose) asparagine glycan is linked to Asn548. Positions Asp592 to Met599 match the DK motif motif.

The protein belongs to the STT3 family. As to quaternary structure, component of the oligosaccharyltransferase (OST) complex. There are 2 OST complexes, OST-A and OST-B, which contain STT3A or STT3B as catalytic subunit, respectively. OST-A and OST-B contain common core subunits RPN1, RPN2, OST48, OST4, DAD1 and TMEM258, and OST-A contains DC2/OSTC and KRTCAP2/KCP2 specific accessory subunits. OST-A complex assembly occurs through the formation of 3 subcomplexes. Subcomplex 1 contains RPN1 and TMEM258, subcomplex 2 contains the OST-A-specific subunits STT3A, DC2/OSTC, and KCP2 as well as the core subunit OST4, and subcomplex 3 contains RPN2, DAD1, and OST48. The OST-A complex can form stable complexes with the Sec61 complex or with both the Sec61 and TRAP complexes. Mg(2+) serves as cofactor. Requires Mn(2+) as cofactor. Expressed at high levels in placenta, liver, muscle and pancreas, and at very low levels in brain, lung and kidney. Expressed in skin fibroblasts (at protein level).

Its subcellular location is the endoplasmic reticulum. It localises to the endoplasmic reticulum membrane. It carries out the reaction a di-trans,poly-cis-dolichyl diphosphooligosaccharide + L-asparaginyl-[protein] = N(4)-(oligosaccharide-(1-&gt;4)-N-acetyl-beta-D-glucosaminyl-(1-&gt;4)-N-acetyl-beta-D-glucosaminyl)-L-asparaginyl-[protein] + a di-trans,poly-cis-dolichyl diphosphate + H(+). It participates in protein modification; protein glycosylation. STT3A, but not STT3B, is specifically inhibited by the N-glycosylation inhibitor NGI-235, which prevents productive binding pose of the glycan donor in the active site of STT3A. Its function is as follows. Catalytic subunit of the oligosaccharyl transferase (OST) complex that catalyzes the initial transfer of a defined glycan (Glc(3)Man(9)GlcNAc(2) in eukaryotes) from the lipid carrier dolichol-pyrophosphate to an asparagine residue within an Asn-X-Ser/Thr consensus motif in nascent polypeptide chains, the first step in protein N-glycosylation. N-glycosylation occurs cotranslationally and the complex associates with the Sec61 complex at the channel-forming translocon complex that mediates protein translocation across the endoplasmic reticulum (ER). All subunits are required for a maximal enzyme activity. This subunit contains the active site and the acceptor peptide and donor lipid-linked oligosaccharide (LLO) binding pockets. STT3A is present in the majority of OST complexes and mediates cotranslational N-glycosylation of most sites on target proteins, while STT3B-containing complexes are required for efficient post-translational glycosylation and mediate glycosylation of sites that have been skipped by STT3A. STT3A-containing OST-A complex is also required to prevent hyperglycosylation of some target proteins by preventing glycosylation of facultative sites before folding of target proteins is completed. The chain is Dolichyl-diphosphooligosaccharide--protein glycosyltransferase subunit STT3A from Homo sapiens (Human).